The primary structure comprises 334 residues: Ornithine carbamoyltransferase (334 aa).

Carbamoyl phosphate is bound by residues 57–60 (STRT), Arg108, and 135–138 (HPTQ). Residues Asn168, Asp232, and 236–237 (SM) each bind L-ornithine. Residues 274–275 (CL) and Arg321 each bind carbamoyl phosphate.

This sequence belongs to the aspartate/ornithine carbamoyltransferase superfamily. OTCase family.

The protein resides in the cytoplasm. The enzyme catalyses carbamoyl phosphate + L-ornithine = L-citrulline + phosphate + H(+). It functions in the pathway amino-acid biosynthesis; L-arginine biosynthesis; L-arginine from L-ornithine and carbamoyl phosphate: step 1/3. Reversibly catalyzes the transfer of the carbamoyl group from carbamoyl phosphate (CP) to the N(epsilon) atom of ornithine (ORN) to produce L-citrulline. In Cutibacterium acnes (strain DSM 16379 / KPA171202) (Propionibacterium acnes), this protein is Ornithine carbamoyltransferase.